Consider the following 407-residue polypeptide: Ornithine cyclodeaminase (407 aa).

Asn-233, Ala-234, Asp-312, Thr-344, Met-345, Leu-346, His-347, Asp-365, Asp-388, and Val-389 together coordinate NAD(+).

It belongs to the AgrE/ArgZ ornithine cyclodeaminase family. The cofactor is NAD(+).

The catalysed reaction is L-ornithine = L-proline + NH4(+). Catalyzes the conversion of ornithine to proline, with the release of ammonia. The sequence is that of Ornithine cyclodeaminase from Archaeoglobus fulgidus (strain ATCC 49558 / DSM 4304 / JCM 9628 / NBRC 100126 / VC-16).